Reading from the N-terminus, the 206-residue chain is Proteasome subunit beta 1 (206 aa).

The propeptide at 1–5 is removed in mature form; by autocatalysis; sequence MLMKG. T6 functions as the Nucleophile in the catalytic mechanism.

The protein belongs to the peptidase T1B family. In terms of assembly, the 20S proteasome core is composed of 14 alpha and 14 beta subunits that assemble into four stacked heptameric rings, resulting in a barrel-shaped structure. The two inner rings, each composed of seven catalytic beta subunits, are sandwiched by two outer rings, each composed of seven alpha subunits. The catalytic chamber with the active sites is on the inside of the barrel. Has a gated structure, the ends of the cylinder being occluded by the N-termini of the alpha-subunits. Is capped at one or both ends by the proteasome regulatory ATPase, PAN.

The protein localises to the cytoplasm. The catalysed reaction is Cleavage of peptide bonds with very broad specificity.. Its activity is regulated as follows. The formation of the proteasomal ATPase PAN-20S proteasome complex, via the docking of the C-termini of PAN into the intersubunit pockets in the alpha-rings, triggers opening of the gate for substrate entry. Interconversion between the open-gate and close-gate conformations leads to a dynamic regulation of the 20S proteasome proteolysis activity. Component of the proteasome core, a large protease complex with broad specificity involved in protein degradation. This is Proteasome subunit beta 1 from Korarchaeum cryptofilum (strain OPF8).